A 223-amino-acid polypeptide reads, in one-letter code: Alpha-S2-casein (223 aa).

The N-terminal stretch at 1–15 (MKFFIFTCLLAVALA) is a signal peptide. Phosphoserine is present on residues S23, S24, S25, S72, S73, S74, S77, S145, S147, S151, and S159. Residues 77 to 141 (SAEVAPEEIK…AGPFTPTVNR (65 aa)) constitute a repeat. The segment at residues 159-223 (STEVFTKKTK…TNAIPYVRYL (65 aa)) is a repeat.

The protein belongs to the alpha-casein family. As to expression, mammary gland specific. Secreted in milk.

The protein localises to the secreted. Functionally, important role in the capacity of milk to transport calcium phosphate. This is Alpha-S2-casein (CSN1S2) from Capra hircus (Goat).